A 323-amino-acid chain; its full sequence is L-lactate dehydrogenase (323 aa).

NAD(+) is bound by residues V16, N37, and 81 to 82 (GA). Residues Q84, R90, and 122-125 (NPVD) each bind substrate. Residues 120 to 122 (ATN) and S145 each bind NAD(+). 150–153 (DSAR) is a binding site for substrate. The active-site Proton acceptor is the H177. The residue at position 221 (Y221) is a Phosphotyrosine. A substrate-binding site is contributed by T230.

Belongs to the LDH/MDH superfamily. LDH family. As to quaternary structure, homotetramer.

It localises to the cytoplasm. The catalysed reaction is (S)-lactate + NAD(+) = pyruvate + NADH + H(+). The protein operates within fermentation; pyruvate fermentation to lactate; (S)-lactate from pyruvate: step 1/1. Its function is as follows. Catalyzes the conversion of lactate to pyruvate. This chain is L-lactate dehydrogenase, found in Limosilactobacillus reuteri (Lactobacillus reuteri).